We begin with the raw amino-acid sequence, 1021 residues long: MELVVGASEATMKSLLGKLGNLLAQEYALISGIRGDIQYINDELASMQAFLRDLSNVPEGHSHGHRMKDWMKQIRDIAYDVEDCIDDFAHRLPQDSISDAKWSFLLTKIYELWTWWPRRVIASNIAQLKVRAQQIADRRSRYGVNNPEHLDSSSSARTRAVNYEIAEYQVTSPQIIGIKEPVGMKTVMEELEVWLTNPQAENGQAVLSIVGFGGVGKTTIATALYRKVSEKFQCRASVAVSQNYDQGKVLNSILSQVSNQEQGSSTTISEKKNLTSGAKSMLKTALSLLRGNCICQPENDGNPDNTPIRLQETTDDDQNPRKLEQLLAEKSYILLIDDIWSAETWESIRSILPKNNKGGRIIVTTRFQAVGSTCSPLETDRLHTVDFLTDDESQNLFNTSICESKIRKDSNKVDEQVPEEIWKICGGLPLAIVSMAGLVACNPRKACCDWSKLCKSLFPEQETPLTLDGVTRILDCCYNDLPADLKTCLLYLSIFPKGWKISRKRLSRRWIAEGFANEKQGLTQERVAEAYFNQLTRRNLVRPMEHGSNGKVKTFQVHDMVLEYIMSKSIEENFITVVGGHWQMTAPSNKVRRLSMQSSGSNRGSSTKGLNLAQVRSLTVFGNLNHVPFHSFNYGIIQVLDLEDWKGLKERHMTEICQMLLLKYLSIRRTEISKIPSKIQKLEYLETLDIRETYVRDLPKSIVQLKRIISILGGNKNTRKGLRLPQEKSKKPIKNPSPQGKTKEPAKKGFLSQEKGKGAMKALRVLSGIEIVEESSEVAAGLHQLTGLRKLAIYKLNITKGGDTFKQLQSSIEYLGSCGLQTLAINDENSEFINSLGDMPAPPRYLVALELSGKLEKLPKWITSITTLNKLTISVTVLRTETLEILHILPSLFSLTFAFSLSAAKQDQDIIKDILENNKLDSDGEIVIPAEGFKSLKLLRFFAPLVPKLSFLDKNAMPALEIIEMRFKDFEGLFGIEILENLREVHLKVSDGAEAITKFLVNDLKVNTEKPKVFVDGIVTA.

The tract at residues 1–182 (MELVVGASEA…PQIIGIKEPV (182 aa)) is structured coiled coil (CC) domain. The NB-ARC domain occupies 186 to 519 (TVMEELEVWL…WIAEGFANEK (334 aa)). Positions 297-317 (PENDGNPDNTPIRLQETTDDD) are disordered. 3 LRR repeats span residues 612–634 (LAQV…SFNY), 659–682 (MLLL…IQKL), and 683–705 (EYLE…IVQL). The disordered stretch occupies residues 719–751 (RKGLRLPQEKSKKPIKNPSPQGKTKEPAKKGFL). LRR repeat units lie at residues 785–807 (LTGL…TFKQ), 817–841 (SCGL…DMPA), 843–865 (PRYL…ITSI), 866–888 (TTLN…ILHI), 912–935 (KDIL…GFKS), and 957–981 (MPAL…ILEN).

It belongs to the disease resistance NB-LRR family. In terms of tissue distribution, constitutively expressed.

In terms of biological role, disease resistance (R) protein. Resistance proteins guard the plant against pathogens that contain an appropriate avirulence protein via an indirect interaction with this avirulence protein. That triggers a defense system including the hypersensitive response, which restricts the pathogen growth. Contribution of Pikm-1 is required to recognize the effector avirulence protein AVR-Pik. This is Disease resistance protein Pikm2-TS from Oryza sativa subsp. japonica (Rice).